The chain runs to 83 residues: Sec-independent protein translocase protein TatA (83 aa).

Residues 1-21 form a helical membrane-spanning segment; that stretch reads MGGLSLPHLIVLALVVLILFG. Residues 34–83 form a disordered region; that stretch reads KGIKSFKQGMNDEDSKPVTPPPAQIPPASLQQTPPPAQPAPQPTSTDQAQ. Pro residues predominate over residues 66–75; it reads TPPPAQPAPQ.

This sequence belongs to the TatA/E family. The Tat system comprises two distinct complexes: a TatABC complex, containing multiple copies of TatA, TatB and TatC subunits, and a separate TatA complex, containing only TatA subunits. Substrates initially bind to the TatABC complex, which probably triggers association of the separate TatA complex to form the active translocon.

The protein localises to the cell inner membrane. In terms of biological role, part of the twin-arginine translocation (Tat) system that transports large folded proteins containing a characteristic twin-arginine motif in their signal peptide across membranes. TatA could form the protein-conducting channel of the Tat system. The polypeptide is Sec-independent protein translocase protein TatA (Novosphingobium aromaticivorans (strain ATCC 700278 / DSM 12444 / CCUG 56034 / CIP 105152 / NBRC 16084 / F199)).